We begin with the raw amino-acid sequence, 347 residues long: D-alanine--D-alanine ligase (347 aa).

One can recognise an ATP-grasp domain in the interval 131-333 (KRVLESAGIA…YPELIERLVD (203 aa)). 161–216 (EEKLAYPVFTKPSNMGSSVGISKSENQEELRQALKLAFRYDSRVLVEQGVNAREIE) is a binding site for ATP. 3 residues coordinate Mg(2+): D287, E300, and N302.

It belongs to the D-alanine--D-alanine ligase family. Requires Mg(2+) as cofactor. Mn(2+) serves as cofactor.

It is found in the cytoplasm. It carries out the reaction 2 D-alanine + ATP = D-alanyl-D-alanine + ADP + phosphate + H(+). It participates in cell wall biogenesis; peptidoglycan biosynthesis. In terms of biological role, cell wall formation. This is D-alanine--D-alanine ligase from Streptococcus pneumoniae (strain JJA).